The primary structure comprises 1455 residues: Membrane-associated guanylate kinase, WW and PDZ domain-containing protein 2 (1455 aa).

Residues 17–101 (ESVIGRNPEG…PLRLKCVKQG (85 aa)) enclose the PDZ 1 domain. A Guanylate kinase-like domain is found at 109 to 283 (RHYLNLRFQK…APVYSQPEEL (175 aa)). The tract at residues 205–306 (PGATPSAEGK…DNEEPDPLPD (102 aa)) is disordered. The span at 241-252 (VVNGNGVVVTPE) shows a compositional bias: low complexity. Residues 281–296 (EELKEQMDDTKPTKPE) are compositionally biased toward basic and acidic residues. WW domains follow at residues 302–335 (DPLPDNWEMAYTEKGEVYFIDHNTKTTSWLDPRL) and 348–381 (NELPYGWEKIDDPIYGTYYVDHINRRTQFENPVL). Positions 302–381 (DPLPDNWEMA…RRTQFENPVL (80 aa)) are interaction with DDN. At Y362 the chain carries Phosphotyrosine. PDZ domains lie at 426–510 (STTL…CRGY) and 605–683 (TLTI…HRGG). S686 is modified (phosphoserine). The 83-residue stretch at 778-860 (DVHLRRMESG…NGQVNLTVRR (83 aa)) folds into the PDZ 4 domain. Position 827 is a phosphotyrosine (Y827). The tract at residues 869 to 913 (CPENGRSPGSVSTHHSSPRSDYATYTNSNHAAPSSNASPPEGFAS) is disordered. 2 positions are modified to phosphoserine: S884 and S885. The segment covering 895 to 908 (NSNHAAPSSNASPP) has biased composition (low complexity). A PDZ 5 domain is found at 920 to 1010 (DVVIHRKENE…SVTLRIIPQE (91 aa)). The span at 1011 to 1040 (ELNSPTSAPSSEKQSPMAQQSPLAQQSPLA) shows a compositional bias: polar residues. The segment at 1011 to 1136 (ELNSPTSAPS…PDTRQYPLSD (126 aa)) is disordered. Position 1014 is a phosphoserine (S1014). A compositionally biased stretch (basic and acidic residues) spans 1067 to 1083 (NSYRSEVKARQDVKPDI). Residues 1147–1229 (TVDMEKGAKG…RVRLLLKRGT (83 aa)) enclose the PDZ 6 domain. The interval 1231–1455 (QVPEYDEPAP…LKPGASAASR (225 aa)) is disordered. A compositionally biased stretch (low complexity) spans 1238 to 1249 (PAPWSSPAAAAP). Residues 1287-1299 (DIKREHDVRKPKE) show a composition bias toward basic and acidic residues. Low complexity-rich tracts occupy residues 1346–1363 (EARAPGLAAADAADAARA), 1399–1412 (ALEAEGRAGARAGP), and 1422–1433 (APARKAAVAPGP).

This sequence belongs to the MAGUK family. In terms of assembly, interacts (via its WW domains) with DRPLA. Interacts (via its second PDZ domain) with PTEN (via unphosphorylated C-terminus); this interaction diminishes the degradation rate of PTEN. Interacts (via guanylate kinase domain) with DLGAP1. Interacts (via the PDZ domains) with GRIN2A, GRID2 and NLGN1. Interacts with CTNND2, CTNNB1, MAGUIN-1, ACVR2A, SMAD2 and SMAD3. Part of a complex consisting of MAGI2/ARIP1, ACVR2A, ACVR1B and SMAD3. May interact with HTR2A. Interacts with IGSF9, RAPGEF2 and HTR4. Identified in a complex with ACTN4, CASK, IQGAP1, NPHS1, SPTAN1 and SPTBN1. Found in a complex, at least composed of KIDINS220, MAGI2, NTRK1 and RAPGEF2; the complex is mainly formed at late endosomes in a NGF-dependent manner. Interacts with RAPGEF2; the interaction occurs before or after nerve growth factor (NGF) stimulation. Interacts (via PDZ domain) with KIDINS220 (via C-terminal domain). Interacts with DDN. Interacts with DLL1. Found in a complex with IGSF9B and NLGN2; the interaction with IGSF9B is mediated via the PDZ 5 and PDZ 6 domains, while the interaction with NLGN2 is mediated via the WW1, WW2 and PDZ2 domains. Interacts (via PDZ 6 domain) with USH1G (via SAM domain); the interaction is triggered by phosphorylation of USH1G by CK2 and negatively regulates MAGI2-mediated endocytosis. In terms of tissue distribution, specifically expressed in brain.

The protein localises to the cytoplasm. The protein resides in the late endosome. It localises to the synapse. It is found in the synaptosome. Its subcellular location is the cell membrane. The protein localises to the cytoskeleton. The protein resides in the microtubule organizing center. It localises to the centrosome. It is found in the cell projection. Its subcellular location is the cilium. The protein localises to the centriole. The protein resides in the photoreceptor inner segment. It localises to the photoreceptor outer segment. Functionally, seems to act as a scaffold molecule at synaptic junctions by assembling neurotransmitter receptors and cell adhesion proteins. Plays a role in nerve growth factor (NGF)-induced recruitment of RAPGEF2 to late endosomes and neurite outgrowth. May play a role in regulating activin-mediated signaling in neuronal cells. Enhances the ability of PTEN to suppress AKT1 activation. Plays a role in receptor-mediated clathrin-dependent endocytosis which is required for ciliogenesis. The polypeptide is Membrane-associated guanylate kinase, WW and PDZ domain-containing protein 2 (MAGI2) (Homo sapiens (Human)).